The primary structure comprises 279 residues: MASDSPLRAHLRLKFAESSGITRMVERDHHGPLLVQKPLYPEGYEVCQAVVIHPPGGVVAGDELGIRVHVGPSAHAQITSPGATKWYKSKGRTARQHVYLHAEAGGVLEWMPQETIFFNNARVMLHHEVELEKDSVYMSCEILCFGRTAFGESFDSGEIKQHTSIRQEGKLVWFEKLRLEGGSKAMNGRLALAGRAVCATFIMSGKPLPAQAIDLVREEAVRIGGESGQVGITQLKSLLVARFLGDSSEVARHVMLCIWRAVRPITLGRPAIVPRSWNT.

The protein belongs to the UreD family. UreD, UreF and UreG form a complex that acts as a GTP-hydrolysis-dependent molecular chaperone, activating the urease apoprotein by helping to assemble the nickel containing metallocenter of UreC. The UreE protein probably delivers the nickel.

It is found in the cytoplasm. In terms of biological role, required for maturation of urease via the functional incorporation of the urease nickel metallocenter. This Nitrosospira multiformis (strain ATCC 25196 / NCIMB 11849 / C 71) protein is Urease accessory protein UreD.